A 72-amino-acid chain; its full sequence is uncharacterized protein (72 aa).

This is an uncharacterized protein from Rickettsia conorii (strain ATCC VR-613 / Malish 7).